The chain runs to 401 residues: S-adenosylmethionine synthase (401 aa).

Position 137 to 142 (137 to 142 (GQGSGD)) interacts with ATP.

The protein belongs to the AdoMet synthase 2 family. The cofactor is Mg(2+).

The catalysed reaction is L-methionine + ATP + H2O = S-adenosyl-L-methionine + phosphate + diphosphate. Its pathway is amino-acid biosynthesis; S-adenosyl-L-methionine biosynthesis; S-adenosyl-L-methionine from L-methionine: step 1/1. In terms of biological role, catalyzes the formation of S-adenosylmethionine from methionine and ATP. The sequence is that of S-adenosylmethionine synthase from Haloquadratum walsbyi (strain DSM 16790 / HBSQ001).